A 252-amino-acid polypeptide reads, in one-letter code: uncharacterized protein (252 aa).

The stretch at 106 to 140 forms a coiled coil; that stretch reads IQSLHARRDHLDNAVEQLKSQLSRLDSSVAILKSQ.

This is an uncharacterized protein from Caenorhabditis elegans.